A 92-amino-acid polypeptide reads, in one-letter code: Putative defensin-like protein 251 (92 aa).

Positions 1 to 27 are cleaved as a signal peptide; that stretch reads MRCVTSFVVFCILMFFVLNIFTVEVKA. 4 disulfide bridges follow: C34/C90, C45/C69, C53/C82, and C67/C84.

It belongs to the DEFL family.

Its subcellular location is the secreted. The sequence is that of Putative defensin-like protein 251 (SCRL12) from Arabidopsis thaliana (Mouse-ear cress).